We begin with the raw amino-acid sequence, 220 residues long: Fructose-6-phosphate aldolase 1 (220 aa).

Catalysis depends on Lys85, which acts as the Schiff-base intermediate with substrate.

Belongs to the transaldolase family. Type 3A subfamily. As to quaternary structure, homodecamer. Five subunits are arranged as a pentamer, and two ring-like pentamers pack like a donut to form the decamer.

It is found in the cytoplasm. It catalyses the reaction beta-D-fructose 6-phosphate = dihydroxyacetone + D-glyceraldehyde 3-phosphate. Inhibited by glycerol, inorganic phosphate and arabinose 5-phosphate. In terms of biological role, catalyzes the reversible formation of fructose 6-phosphate from dihydroxyacetone (DHA) and D-glyceraldehyde 3-phosphate via an aldolization reaction. Can utilize several aldehydes as acceptor compounds in vitro, and hydroxyacetone (HA) or 1-hydroxy-butan-2-one as alternative donor substrate. Is also able to catalyze the direct stereoselective self-aldol addition of glycolaldehyde to furnish D-(-)-threose, and cross-aldol reactions of glycolaldehyde to other aldehyde acceptors. Is not able to cleave fructose, fructose 1-phosphate, glucose 6-phosphate, sedoheptulose 1,7-bisphosphate, xylulose 5-phosphate, ribulose 5-phosphate, and fructose 1,6-bisphosphate; cannot use dihydroxyacetone phosphate as donor compound nor D-glyceraldehyde as acceptor. Does not display transaldolase activity. The sequence is that of Fructose-6-phosphate aldolase 1 (fsaA) from Escherichia coli (strain K12).